A 214-amino-acid chain; its full sequence is uncharacterized protein (214 aa).

Residues 39–68 adopt a coiled-coil conformation; sequence KLRSKKEVEEKIKEVDRELEEVVNAGVSIN. Residues 99 to 114 are compositionally biased toward basic and acidic residues; it reads EIKVEAPEPDEEKLPD. Residues 99–162 are disordered; that stretch reads EIKVEAPEPD…EEVEFDEEDD (64 aa). The span at 123–162 shows a compositional bias: acidic residues; that stretch reads SDLDMDFEDLGQEIPLDADEQEEEEEEEEVEEVEFDEEDD. Positions 138–212 form a coiled coil; sequence LDADEQEEEE…IQRLKVLSGG (75 aa).

This is an uncharacterized protein from Archaeoglobus fulgidus (strain ATCC 49558 / DSM 4304 / JCM 9628 / NBRC 100126 / VC-16).